Consider the following 460-residue polypeptide: Cation efflux system protein CusC (460 aa).

The N-terminal stretch at methionine 1 to glycine 17 is a signal peptide. The N-palmitoyl cysteine moiety is linked to residue cysteine 18. Cysteine 18 carries S-diacylglycerol cysteine lipidation.

The protein belongs to the outer membrane factor (OMF) (TC 1.B.17) family. As to quaternary structure, homotrimer. Component of the cus efflux system composed of CusA, CusB, CusC and CusF.

It localises to the cell outer membrane. Functionally, forms pores that allow passive diffusion of cations across the outer membrane. Part of a cation efflux system that mediates resistance to copper and silver. The protein is Cation efflux system protein CusC (cusC) of Escherichia coli O6:H1 (strain CFT073 / ATCC 700928 / UPEC).